Reading from the N-terminus, the 71-residue chain is Biotinylated protein TB7.3 homolog (71 aa).

The region spanning 2-71 (AEDVRAEIVA…QAGDLIAVIS (70 aa)) is the Biotinyl-binding domain. Lysine 37 carries the N6-biotinyllysine modification.

The chain is Biotinylated protein TB7.3 homolog from Mycobacterium leprae (strain TN).